A 511-amino-acid chain; its full sequence is Centrosomal protein CCDC61 (511 aa).

The head domain stretch occupies residues 1–144 (MEVGTVVQEE…PLPLPYLGKP (144 aa)). Residues 147–272 (AELQKEIRAL…RVKSLTTELA (126 aa)) are a coiled coil. Disordered stretches follow at residues 306–403 (TRVG…SREP) and 447–486 (RGRKLMSNGPAVSRGRHINKKPMCSTPAQRMRAGDTSMDT). Positions 315-335 (GSRERIEDRGRRSEERVRRAD) are enriched in basic and acidic residues. Residues 338 to 352 (GSRNCITRPSPSPTG) show a composition bias toward polar residues. The span at 366–378 (DRQRRQKEAELKS) shows a compositional bias: basic and acidic residues.

This sequence belongs to the CCDC61 family. In terms of assembly, forms homodimers (via head domain).

It localises to the cytoplasm. The protein localises to the cytoskeleton. It is found in the microtubule organizing center. The protein resides in the centrosome. Its subcellular location is the centriolar satellite. It localises to the cilium basal body. Its function is as follows. Microtubule-binding centrosomal protein required for centriole cohesion, independently of the centrosome-associated protein/CEP250 and rootletin/CROCC linker. In interphase, required for anchoring microtubule at the mother centriole subdistal appendages and for centrosome positioning. During mitosis, may be involved in spindle assembly and chromatin alignment by regulating the organization of spindle microtubules into a symmetrical structure. Plays a non-essential role in ciliogenesis. In Danio rerio (Zebrafish), this protein is Centrosomal protein CCDC61.